A 117-amino-acid chain; its full sequence is Large ribosomal subunit protein bL20 (117 aa).

The protein belongs to the bacterial ribosomal protein bL20 family.

Binds directly to 23S ribosomal RNA and is necessary for the in vitro assembly process of the 50S ribosomal subunit. It is not involved in the protein synthesizing functions of that subunit. In Geobacter sulfurreducens (strain ATCC 51573 / DSM 12127 / PCA), this protein is Large ribosomal subunit protein bL20.